Reading from the N-terminus, the 210-residue chain is Somatotropin-1 (210 aa).

Residues 1–22 (MGQVFLLMPVLLASCFLSQGAA) form the signal peptide. H38 contributes to the Zn(2+) binding site. Residues C71 and C183 are joined by a disulfide bond. A Zn(2+)-binding site is contributed by E192. C200 and C208 are disulfide-bonded.

This sequence belongs to the somatotropin/prolactin family.

Its subcellular location is the secreted. Growth hormone plays an important role in growth control and is involved in the regulation of several anabolic processes. Implicated as an osmoregulatory substance important for seawater adaptation. This chain is Somatotropin-1 (gh1), found in Oncorhynchus nerka (Sockeye salmon).